The primary structure comprises 375 residues: tRNA-specific 2-thiouridylase MnmA (375 aa).

ATP is bound by residues 12–19 (GMSGGVDS) and Met-38. The interaction with target base in tRNA stretch occupies residues 98 to 100 (NPD). Cys-103 (nucleophile) is an active-site residue. Cys-103 and Cys-200 are disulfide-bonded. Gly-127 provides a ligand contact to ATP. Residues 150 to 152 (KDQ) are interaction with tRNA. Catalysis depends on Cys-200, which acts as the Cysteine persulfide intermediate. The interaction with tRNA stretch occupies residues 312 to 313 (RY).

It belongs to the MnmA/TRMU family.

The protein localises to the cytoplasm. It catalyses the reaction S-sulfanyl-L-cysteinyl-[protein] + uridine(34) in tRNA + AH2 + ATP = 2-thiouridine(34) in tRNA + L-cysteinyl-[protein] + A + AMP + diphosphate + H(+). Catalyzes the 2-thiolation of uridine at the wobble position (U34) of tRNA, leading to the formation of s(2)U34. The chain is tRNA-specific 2-thiouridylase MnmA from Lactobacillus helveticus (strain DPC 4571).